A 1390-amino-acid polypeptide reads, in one-letter code: DNA-directed RNA polymerase subunit beta' (1390 aa).

Residues cysteine 73, cysteine 75, cysteine 88, and cysteine 91 each coordinate Zn(2+). 3 residues coordinate Mg(2+): aspartate 464, aspartate 466, and aspartate 468. Zn(2+) is bound by residues cysteine 810, cysteine 884, cysteine 891, and cysteine 894. The segment at 1365-1390 is disordered; the sequence is EKKEQKIYGNGEEPAKEQKWIPQAGT.

Belongs to the RNA polymerase beta' chain family. In terms of assembly, the RNAP catalytic core consists of 2 alpha, 1 beta, 1 beta' and 1 omega subunit. When a sigma factor is associated with the core the holoenzyme is formed, which can initiate transcription. Mg(2+) serves as cofactor. The cofactor is Zn(2+).

It carries out the reaction RNA(n) + a ribonucleoside 5'-triphosphate = RNA(n+1) + diphosphate. Functionally, DNA-dependent RNA polymerase catalyzes the transcription of DNA into RNA using the four ribonucleoside triphosphates as substrates. This chain is DNA-directed RNA polymerase subunit beta', found in Methylacidiphilum infernorum (isolate V4) (Methylokorus infernorum (strain V4)).